The following is a 487-amino-acid chain: DNA polymerase delta small subunit (487 aa).

M1 carries the N-acetylmethionine modification. S20 is subject to Phosphoserine.

It belongs to the DNA polymerase delta/II small subunit family. DNA polymerase delta is a heterotrimer of POL3, POL32 and HYS2.

It is found in the nucleus. It carries out the reaction DNA(n) + a 2'-deoxyribonucleoside 5'-triphosphate = DNA(n+1) + diphosphate. In terms of biological role, DNA polymerase delta (DNA polymerase III) participates in chromosomal DNA replication. It is required during synthesis of the leading and lagging DNA strands at the replication fork and binds at/or near replication origins and moves along DNA with the replication fork. It has 3'-5' proofreading exonuclease activity that correct errors arising during DNA replication. It is also involved in DNA synthesis during DNA repair. The sequence is that of DNA polymerase delta small subunit (POL31) from Saccharomyces cerevisiae (strain ATCC 204508 / S288c) (Baker's yeast).